We begin with the raw amino-acid sequence, 505 residues long: Trans-cinnamate 4-monooxygenase (505 aa).

The helical transmembrane segment at 3 to 23 (LLLLEKTLLGLFAAIIVASIV) threads the bilayer. (E)-cinnamate contacts are provided by residues 213-218 (RSRLAQ) and A306. Residue C447 participates in heme binding.

Belongs to the cytochrome P450 family. It depends on heme as a cofactor.

It localises to the membrane. The catalysed reaction is (E)-cinnamate + reduced [NADPH--hemoprotein reductase] + O2 = (E)-4-coumarate + oxidized [NADPH--hemoprotein reductase] + H2O + H(+). It participates in phenylpropanoid metabolism; trans-4-coumarate biosynthesis; trans-4-coumarate from trans-cinnamate: step 1/1. Its function is as follows. Catalyzes the first oxidative step of the phenylpropanoid pathway in higher plants by transforming trans-cinnamate into p-coumarate. The compounds formed by this pathway are essential components for lignification, pollination, and defense against ultraviolet light, predators and pathogens. This is Trans-cinnamate 4-monooxygenase (CYP73A4) from Catharanthus roseus (Madagascar periwinkle).